Consider the following 906-residue polypeptide: Protein translocase subunit SecA (906 aa).

ATP contacts are provided by residues Q89, 107–111 (GEGKT), and D501. Zn(2+)-binding residues include C891, C893, C902, and H903.

The protein belongs to the SecA family. Monomer and homodimer. Part of the essential Sec protein translocation apparatus which comprises SecA, SecYEG and auxiliary proteins SecDF-YajC and YidC. Requires Zn(2+) as cofactor.

The protein resides in the cell inner membrane. It is found in the cytoplasm. It carries out the reaction ATP + H2O + cellular proteinSide 1 = ADP + phosphate + cellular proteinSide 2.. Functionally, part of the Sec protein translocase complex. Interacts with the SecYEG preprotein conducting channel. Has a central role in coupling the hydrolysis of ATP to the transfer of proteins into and across the cell membrane, serving both as a receptor for the preprotein-SecB complex and as an ATP-driven molecular motor driving the stepwise translocation of polypeptide chains across the membrane. In Parvibaculum lavamentivorans (strain DS-1 / DSM 13023 / NCIMB 13966), this protein is Protein translocase subunit SecA.